The following is a 1217-amino-acid chain: Disease resistance protein RPS4 (1217 aa).

Residues 14 to 175 (PQHQVFINFR…EIVKAVKTAL (162 aa)) enclose the TIR domain. The active site involves Glu88. The NB-ARC domain maps to 211–472 (EQRLKDLEEK…FRSQDKDYVE (262 aa)). LRR repeat units lie at residues 260–285 (HALIDQIRVKSKHLELDRLPQMLLGE), 436–459 (PNIVSVFQVSYDELTTAQKDAFLD), 614–636 (LKEVRCLHWLKFPLETLPNDFNP), 637–659 (INLVDLKLPYSEMEQLWEGDKDT), 682–706 (AEKLQRLNLEGCTTLKAFPHDMKKM), 708–728 (MLAFLNLKGCTSLESLPEMNL), 729–749 (ISLKTLTLSGCSTFKEFPLIS), 750–774 (DNIETLYLDGTAISQLPMNMEKLQR), 796–818 (LKALQELILSDCLNLKIFPEIDI), 819–842 (SFLNILLLDGTAIEVMPQLPSVQY), and 861–887 (LSQLKWLDLKYCTSLTSVPEFPPNLQC). The tract at residues 1162–1195 (TEGVDGRVKKKKKTRMDNGRPKKKQRSGRDDNQT) is disordered. A Nuclear localization signal motif is present at residues 1170-1177 (KKKKKTRM).

As to quaternary structure, interacts with EDS1.

The protein localises to the nucleus. The enzyme catalyses NAD(+) + H2O = ADP-D-ribose + nicotinamide + H(+). In terms of biological role, disease resistance (R) protein that specifically recognizes the AvrRps4 type III effector avirulence protein from Pseudomonas syringae. Resistance proteins guard the plant against pathogens that contain an appropriate avirulence protein via an indirect interaction with this avirulence protein. That triggers a defense system including the hypersensitive response, which restricts the pathogen growth. The combined presence of both regular and alternative RPS4 transcripts with truncated open reading frames (ORFs) is necessary for function. RPS4 function is regulated at multiple levels, including gene expression, alternative splicing, and protein stability. Acts as a disease resistance protein involved in resistance to fungal and bacterial pathogens, including R.solanacearum, P.syringae pv. tomato and C.higginsianum. In presence of RRS1, elicites an EDS1-dependent hypersensitive response. This is Disease resistance protein RPS4 from Arabidopsis thaliana (Mouse-ear cress).